Reading from the N-terminus, the 412-residue chain is Carboxypeptidase B1 (412 aa).

The N-terminal stretch at 1–18 is a signal peptide; sequence MIPRIVVVLLSVLAVVTA. Residues 19–75 constitute a propeptide, activation peptide; that stretch reads RRSYEGYKVYGIVPESPDEAEILYQIRQSNPDLDFWHLTKQPGDEARVLVAPKDQRS. The Peptidase M14 domain occupies 118 to 408; it reads SYLRHNEINE…VGIKAMALKV (291 aa). Residues histidine 175 and glutamate 178 each contribute to the Zn(2+) site. 175-178 contributes to the a peptide binding site; it reads HARE. Asparagine 205 carries an N-linked (GlcNAc...) asparagine glycan. Residues arginine 230 and 246 to 247 contribute to the a peptide site; that span reads NR. Cysteine 240 and cysteine 263 are disulfide-bonded. Histidine 299 is a binding site for Zn(2+). A peptide contacts are provided by residues 300-301 and tyrosine 351; that span reads SY. Residue glutamate 374 is the Proton donor/acceptor of the active site. An N-linked (GlcNAc...) asparagine glycan is attached at asparagine 395.

This sequence belongs to the peptidase M14 family. As to quaternary structure, monomer. Interacts with Dengue virus type 2 (DENV2, MY89-88549 strain) envelope protein E. Interacts with Dengue virus envelope protein E type 3, type 2, type 4 and type 1 with decreasing strength. Requires Zn(2+) as cofactor. In terms of tissue distribution, expressed in midgut (at protein level).

It is found in the endoplasmic reticulum. It carries out the reaction Preferential release of a C-terminal lysine or arginine amino acid.. Inhibited by S.tuberosum metallocarboxypeptidase inhibitor. Carboxypeptidase that preferentially hydrolyzes arginine and lysine residues at the C-terminus. During infection by dengue virus, may play a role in preventing viral packaging, maturation, and release from the midgut. The sequence is that of Carboxypeptidase B1 from Aedes aegypti (Yellowfever mosquito).